The following is a 178-amino-acid chain: Translation initiation factor IF-3 (178 aa).

It belongs to the IF-3 family. In terms of assembly, monomer.

The protein localises to the cytoplasm. Its function is as follows. IF-3 binds to the 30S ribosomal subunit and shifts the equilibrium between 70S ribosomes and their 50S and 30S subunits in favor of the free subunits, thus enhancing the availability of 30S subunits on which protein synthesis initiation begins. This chain is Translation initiation factor IF-3, found in Ureaplasma parvum serovar 3 (strain ATCC 700970).